The primary structure comprises 374 residues: Putative cullin-like protein 2 (374 aa).

The protein belongs to the cullin family.

The sequence is that of Putative cullin-like protein 2 from Arabidopsis thaliana (Mouse-ear cress).